The chain runs to 81 residues: Photosystem I iron-sulfur center (81 aa).

2 consecutive 4Fe-4S ferredoxin-type domains span residues 2–31 (AHTV…MVPW) and 39–68 (IASA…IRVY). Residues Cys11, Cys14, Cys17, Cys21, Cys48, Cys51, Cys54, and Cys58 each contribute to the [4Fe-4S] cluster site.

In terms of assembly, the eukaryotic PSI reaction center is composed of at least 11 subunits. [4Fe-4S] cluster is required as a cofactor.

It localises to the plastid. It is found in the cyanelle thylakoid membrane. The catalysed reaction is reduced [plastocyanin] + hnu + oxidized [2Fe-2S]-[ferredoxin] = oxidized [plastocyanin] + reduced [2Fe-2S]-[ferredoxin]. In terms of biological role, apoprotein for the two 4Fe-4S centers FA and FB of photosystem I (PSI); essential for photochemical activity. FB is the terminal electron acceptor of PSI, donating electrons to ferredoxin. The C-terminus interacts with PsaA/B/D and helps assemble the protein into the PSI complex. Required for binding of PsaD and PsaE to PSI. PSI is a cytochrome c6-ferredoxin oxidoreductase, converting photonic excitation into a charge separation, which transfers an electron from the donor P700 chlorophyll pair to the spectroscopically characterized acceptors A0, A1, FX, FA and FB in turn. This is Photosystem I iron-sulfur center from Cyanophora paradoxa.